A 259-amino-acid chain; its full sequence is UPF0246 protein ABBFA_001173 (259 aa).

This sequence belongs to the UPF0246 family.

The sequence is that of UPF0246 protein ABBFA_001173 from Acinetobacter baumannii (strain AB307-0294).